A 556-amino-acid polypeptide reads, in one-letter code: Formate--tetrahydrofolate ligase 1 (556 aa).

65–72 is an ATP binding site; that stretch reads TPAGEGKS.

This sequence belongs to the formate--tetrahydrofolate ligase family.

The enzyme catalyses (6S)-5,6,7,8-tetrahydrofolate + formate + ATP = (6R)-10-formyltetrahydrofolate + ADP + phosphate. Its pathway is one-carbon metabolism; tetrahydrofolate interconversion. This is Formate--tetrahydrofolate ligase 1 from Streptococcus pyogenes serotype M4 (strain MGAS10750).